Reading from the N-terminus, the 515-residue chain is N-fatty-acyl-amino acid synthase/hydrolase PM20D1.1 (515 aa).

The signal sequence occupies residues 1-34; it reads MKTKFTKKTVLKFFGILFAILLLSVLILFSVVIG. N-linked (GlcNAc...) asparagine glycans are attached at residues asparagine 50, asparagine 87, and asparagine 118. Histidine 140 contacts Zn(2+). Residue aspartate 142 is part of the active site. Residue aspartate 173 participates in Zn(2+) binding. The active-site Proton acceptor is the glutamate 207. Residues glutamate 208, aspartate 234, and histidine 480 each contribute to the Zn(2+) site.

This sequence belongs to the peptidase M20A family. It depends on Zn(2+) as a cofactor.

The protein localises to the secreted. The catalysed reaction is an N-acyl-L-amino acid + H2O = an L-alpha-amino acid + a carboxylate. It catalyses the reaction an N-acyl-aromatic L-alpha-amino acid + H2O = an aromatic L-alpha-amino acid + a carboxylate. The enzyme catalyses N-(5Z,8Z,11Z,14Z)-eicosatetraenoyl-glycine + H2O = (5Z,8Z,11Z,14Z)-eicosatetraenoate + glycine. It carries out the reaction N-hexadecanoyl-L-phenylalanine + H2O = hexadecanoate + L-phenylalanine. The catalysed reaction is N-octadecanoyl-L-phenylalanine + H2O = octadecanoate + L-phenylalanine. It catalyses the reaction N-(4Z,7Z,10Z,13Z,16Z,19Z-docosahexaenoyl)-L-phenylalanine + H2O = (4Z,7Z,10Z,13Z,16Z,19Z)-docosahexaenoate + L-phenylalanine. The enzyme catalyses N-(9Z-octadecenoyl)-L-asparagine + H2O = L-asparagine + (9Z)-octadecenoate. It carries out the reaction (9Z)-octadecenoate + glycine = N-(9Z-octadecenoyl)glycine + H2O. The catalysed reaction is N-(9Z-octadecenoyl)-L-lysine + H2O = L-lysine + (9Z)-octadecenoate. It catalyses the reaction N-(9Z-octadecenoyl)-L-methionine + H2O = (9Z)-octadecenoate + L-methionine. The enzyme catalyses N-(9Z-octadecenoyl)-L-serine + H2O = L-serine + (9Z)-octadecenoate. It carries out the reaction N-(9Z-octadecenoyl)-L-tryptophan + H2O = L-tryptophan + (9Z)-octadecenoate. The catalysed reaction is N-(9Z-octadecenoyl)-L-tyrosine + H2O = L-tyrosine + (9Z)-octadecenoate. It catalyses the reaction N-(9Z-octadecenoyl)-L-glutamine + H2O = L-glutamine + (9Z)-octadecenoate. The enzyme catalyses N-(5Z,8Z,11Z,14Z-eicosatetraenoyl)-L-serine + H2O = (5Z,8Z,11Z,14Z)-eicosatetraenoate + L-serine. It carries out the reaction (5Z,8Z,11Z,14Z)-eicosatetraenoate + L-phenylalanine = N-(5Z,8Z,11Z,14Z-eicosatetraenoyl)-L-phenylalanine + H2O. The catalysed reaction is N-(9Z-octadecenoyl)-L-leucine + H2O = L-leucine + (9Z)-octadecenoate. It catalyses the reaction L-phenylalanine + (9Z)-octadecenoate = N-(9Z-octadecenoyl)-L-phenylalanine + H2O. The protein operates within amino-acid metabolism. Its pathway is energy metabolism; electron transfer. It functions in the pathway lipid metabolism; fatty acid metabolism. Its activity is regulated as follows. Lipoproteins are powerful coactivators of PM20D1 activity in vitro and NAA biosynthesis in vivo. Functionally, secreted enzyme that regulates the endogenous N-fatty acyl amino acid (NAAs) tissue and circulating levels by functioning as a bidirectional NAA synthase/hydrolase. It condenses free fatty acids and free amino acids to generate NAAs and bidirectionally catalyzes the reverse hydrolysis reaction. Some of these NAAs stimulate oxidative metabolism via mitochondrial uncoupling, increasing energy expenditure in a UPC1-independent manner. Thereby, this secreted protein may indirectly regulate whole body energy expenditure. PM20D1 circulates in tight association with both low- and high-density (LDL and HDL,respectively) lipoprotein particles. The polypeptide is N-fatty-acyl-amino acid synthase/hydrolase PM20D1.1 (Danio rerio (Zebrafish)).